A 339-amino-acid polypeptide reads, in one-letter code: Small ribosomal subunit biogenesis GTPase RsgA (339 aa).

The CP-type G domain maps to 111-271 (MRGLLKPVAA…LIDSPGIREF (161 aa)). Residues 159–162 (NKAD) and 213–221 (GQSGVGKSS) contribute to the GTP site. Zn(2+)-binding residues include C295, C300, H302, and C308.

Belongs to the TRAFAC class YlqF/YawG GTPase family. RsgA subfamily. Monomer. Associates with 30S ribosomal subunit, binds 16S rRNA. Zn(2+) serves as cofactor.

The protein localises to the cytoplasm. Its function is as follows. One of several proteins that assist in the late maturation steps of the functional core of the 30S ribosomal subunit. Helps release RbfA from mature subunits. May play a role in the assembly of ribosomal proteins into the subunit. Circularly permuted GTPase that catalyzes slow GTP hydrolysis, GTPase activity is stimulated by the 30S ribosomal subunit. This Pseudomonas aeruginosa (strain UCBPP-PA14) protein is Small ribosomal subunit biogenesis GTPase RsgA.